A 282-amino-acid polypeptide reads, in one-letter code: Putative quercetin 2,3-dioxygenase VC_A0969 (282 aa).

A disordered region spans residues 1 to 21 (MTKDREIRQTVPAQPTSDGDG). The a divalent metal cation site is built by His59, His61, His103, and Glu105.

Belongs to the pirin family. The cofactor is a divalent metal cation.

It carries out the reaction quercetin + O2 = 2-(3,4-dihydroxybenzoyloxy)-4,6-dihydroxybenzoate + CO. It functions in the pathway flavonoid metabolism; quercetin degradation. In terms of biological role, putative quercetin 2,3-dioxygenase. This chain is Putative quercetin 2,3-dioxygenase VC_A0969, found in Vibrio cholerae serotype O1 (strain ATCC 39315 / El Tor Inaba N16961).